Here is a 156-residue protein sequence, read N- to C-terminus: Cyanate hydratase (156 aa).

Catalysis depends on residues Arg-96, Glu-99, and Ser-122.

It belongs to the cyanase family.

The catalysed reaction is cyanate + hydrogencarbonate + 3 H(+) = NH4(+) + 2 CO2. Its function is as follows. Catalyzes the reaction of cyanate with bicarbonate to produce ammonia and carbon dioxide. This chain is Cyanate hydratase, found in Burkholderia vietnamiensis (strain G4 / LMG 22486) (Burkholderia cepacia (strain R1808)).